A 150-amino-acid polypeptide reads, in one-letter code: Transcriptional regulator MraZ (150 aa).

SpoVT-AbrB domains are found at residues Val5–Glu51 and Ala80–Thr123.

The protein belongs to the MraZ family. As to quaternary structure, forms oligomers.

Its subcellular location is the cytoplasm. The protein resides in the nucleoid. In Thioalkalivibrio sulfidiphilus (strain HL-EbGR7), this protein is Transcriptional regulator MraZ.